Here is a 587-residue protein sequence, read N- to C-terminus: Capsid vertex component 2 (587 aa).

The segment at 1–53 (MAEYVNYVLGSLYVSDTATSTIPTDVRNFIAPPFPLNFWSGPTFTVRSNTRAD) is interaction with major capsid protein/MCP. Residues 113–132 (SADAATPQVNASEADQRPDN) are disordered.

Belongs to the herpesviridae CVC2 protein family. In terms of assembly, heterodimerizes with CVC1. Interacts with major capsid protein/MCP and triplex capsid protein 1/TRX1 at the pentamer vertices. Interacts with the large tegument protein/LTP.

The protein resides in the virion. It is found in the host nucleus. Its function is as follows. Capsid vertex-specific component that plays a role during viral DNA encapsidation, assuring correct genome cleavage and presumably stabilizing capsids that contain full-length viral genomes. Participates in the interaction between the capsid and the tegument through interaction with the large tegument protein/LTP. The protein is Capsid vertex component 2 of Equine herpesvirus 1 (strain V592) (EHV-1).